We begin with the raw amino-acid sequence, 1290 residues long: Alpha-amylase (1290 aa).

Residues 1-31 (MTRKTRYLHQITTLILGGLLIVPAAAPPVSA) form the signal peptide. Glutamate 231 acts as the Nucleophile in catalysis. The active-site Proton donor is aspartate 373. Residues 817-902 (VPANLQATVM…AAATATTPAG (86 aa)) form the Fibronectin type-III domain. Positions 902–978 (GNHVTVYYKQ…SNGGSNYLFG (77 aa)) are CBM25. Composition is skewed to low complexity over residues 994–1008 (APVAPSATPTVAPTA) and 1016–1031 (VTPTVTPITTPTVAPT). The disordered stretch occupies residues 994 to 1037 (APVAPSATPTVAPTATPTPKPSVTPTVTPITTPTVAPTLSPTPT). The CBM25 stretch occupies residues 1092 to 1171 (GNSATIYYKN…NGGSNYHFGT (80 aa)). The region spanning 1183–1289 (TGEPQADSVT…VTLTVQRWKD (107 aa)) is the CBM20 domain.

This sequence belongs to the glycosyl hydrolase 119 (GH119) family.

It localises to the secreted. It carries out the reaction Endohydrolysis of (1-&gt;4)-alpha-D-glucosidic linkages in polysaccharides containing three or more (1-&gt;4)-alpha-linked D-glucose units.. Its function is as follows. Acts on maltooligosaccharides that have a degree of polymerization (DP) of 4 or more, amylose, and soluble or raw starch to produce glucose and maltooligosaccharides up to DP5 by a hydrolysis reaction. Also acts on maltooligosyl trehaloses that have DP5 or more to produce trehalose as the major hydrolysis product. The chain is Alpha-amylase from Niallia circulans (Bacillus circulans).